A 538-amino-acid chain; its full sequence is Fructooligosaccharide ABC transporter substrate-binding protein FusA (538 aa).

The first 22 residues, 1–22 (MKFKTFSKSAVLLTASLAVLAA), serve as a signal peptide directing secretion. Cysteine 23 carries N-palmitoyl cysteine lipidation. The S-diacylglycerol cysteine moiety is linked to residue cysteine 23. Glutamate 167 provides a ligand contact to substrate. Ca(2+) is bound by residues aspartate 215, asparagine 217, asparagine 219, glutamate 221, aspartate 223, and glutamate 224. Position 235 (asparagine 235) interacts with substrate. Residues aspartate 263, phenylalanine 264, aspartate 267, and asparagine 268 each coordinate Ca(2+). Substrate contacts are provided by tryptophan 314, asparagine 318, lysine 353, tryptophan 384, arginine 419, and glutamate 423.

The protein belongs to the bacterial solute-binding protein 1 family. The complex is composed of two ATP-binding proteins (MsmK), two transmembrane proteins (FusB and FusC) and a solute-binding protein (FusA).

The protein resides in the cell membrane. Functionally, part of the ABC transporter complex FusABC-MsmK involved in short- and long-chain fructooligosaccharide (FOS) import. Required for the utilization of long-chain FOSs. Binds kestose, nystose, fructofuranosyl-nystose and inulin, but not sucrose. Has a preference for long-chain FOSs (tetrasaccharides and larger). This Streptococcus pneumoniae serotype 4 (strain ATCC BAA-334 / TIGR4) protein is Fructooligosaccharide ABC transporter substrate-binding protein FusA.